The sequence spans 178 residues: Large ribosomal subunit protein uL10 (178 aa).

Belongs to the universal ribosomal protein uL10 family. Part of the ribosomal stalk of the 50S ribosomal subunit. The N-terminus interacts with L11 and the large rRNA to form the base of the stalk. The C-terminus forms an elongated spine to which L12 dimers bind in a sequential fashion forming a multimeric L10(L12)X complex.

Its function is as follows. Forms part of the ribosomal stalk, playing a central role in the interaction of the ribosome with GTP-bound translation factors. The protein is Large ribosomal subunit protein uL10 of Gloeothece citriformis (strain PCC 7424) (Cyanothece sp. (strain PCC 7424)).